A 471-amino-acid polypeptide reads, in one-letter code: Probable ribonuclease FAU-1 (471 aa).

It belongs to the FAU-1 family.

Functionally, probable RNase involved in rRNA stability through maturation and/or degradation of precursor rRNAs. Preferentially cleaves UA sequences in the 5' precursor region of 5S rRNA. Binds to RNA in loop regions with AU-rich sequences. The protein is Probable ribonuclease FAU-1 of Thermococcus kodakarensis (strain ATCC BAA-918 / JCM 12380 / KOD1) (Pyrococcus kodakaraensis (strain KOD1)).